A 94-amino-acid chain; its full sequence is MLQSNEYFSGKVKSIGFTSSSTGRASVGVMAEGEYTFGTAEPEEMTVVSGALKVLLPGTVDWKVYTAGDVFNVPGHSEFHLQIAEPTSYLCRYL.

Belongs to the nucleoside phosphorylase PpnP family.

It catalyses the reaction a purine D-ribonucleoside + phosphate = a purine nucleobase + alpha-D-ribose 1-phosphate. It carries out the reaction adenosine + phosphate = alpha-D-ribose 1-phosphate + adenine. The enzyme catalyses cytidine + phosphate = cytosine + alpha-D-ribose 1-phosphate. The catalysed reaction is guanosine + phosphate = alpha-D-ribose 1-phosphate + guanine. It catalyses the reaction inosine + phosphate = alpha-D-ribose 1-phosphate + hypoxanthine. It carries out the reaction thymidine + phosphate = 2-deoxy-alpha-D-ribose 1-phosphate + thymine. The enzyme catalyses uridine + phosphate = alpha-D-ribose 1-phosphate + uracil. The catalysed reaction is xanthosine + phosphate = alpha-D-ribose 1-phosphate + xanthine. Its function is as follows. Catalyzes the phosphorolysis of diverse nucleosides, yielding D-ribose 1-phosphate and the respective free bases. Can use uridine, adenosine, guanosine, cytidine, thymidine, inosine and xanthosine as substrates. Also catalyzes the reverse reactions. The protein is Pyrimidine/purine nucleoside phosphorylase of Salmonella arizonae (strain ATCC BAA-731 / CDC346-86 / RSK2980).